Reading from the N-terminus, the 258-residue chain is 1-(5-phosphoribosyl)-5-[(5-phosphoribosylamino)methylideneamino] imidazole-4-carboxamide isomerase 2 (258 aa).

D14 functions as the Proton acceptor in the catalytic mechanism. D140 acts as the Proton donor in catalysis.

The protein belongs to the HisA/HisF family.

The protein localises to the cytoplasm. It catalyses the reaction 1-(5-phospho-beta-D-ribosyl)-5-[(5-phospho-beta-D-ribosylamino)methylideneamino]imidazole-4-carboxamide = 5-[(5-phospho-1-deoxy-D-ribulos-1-ylimino)methylamino]-1-(5-phospho-beta-D-ribosyl)imidazole-4-carboxamide. The protein operates within amino-acid biosynthesis; L-histidine biosynthesis; L-histidine from 5-phospho-alpha-D-ribose 1-diphosphate: step 4/9. The polypeptide is 1-(5-phosphoribosyl)-5-[(5-phosphoribosylamino)methylideneamino] imidazole-4-carboxamide isomerase 2 (hisA2) (Photorhabdus laumondii subsp. laumondii (strain DSM 15139 / CIP 105565 / TT01) (Photorhabdus luminescens subsp. laumondii)).